We begin with the raw amino-acid sequence, 180 residues long: ATP-dependent protease subunit HslV (180 aa).

Residue threonine 5 is part of the active site. The Na(+) site is built by glycine 165, cysteine 168, and threonine 171.

This sequence belongs to the peptidase T1B family. HslV subfamily. As to quaternary structure, a double ring-shaped homohexamer of HslV is capped on each side by a ring-shaped HslU homohexamer. The assembly of the HslU/HslV complex is dependent on binding of ATP.

It is found in the cytoplasm. The catalysed reaction is ATP-dependent cleavage of peptide bonds with broad specificity.. Its activity is regulated as follows. Allosterically activated by HslU binding. Functionally, protease subunit of a proteasome-like degradation complex believed to be a general protein degrading machinery. The protein is ATP-dependent protease subunit HslV of Helicobacter pylori (strain ATCC 700392 / 26695) (Campylobacter pylori).